The chain runs to 334 residues: Probable tRNA pseudouridine synthase B (334 aa).

The active-site Nucleophile is the Asp82. The PUA domain occupies 250–325; sequence LPKVWIRDSA…IAVDVDKVFM (76 aa).

The protein belongs to the pseudouridine synthase TruB family. Type 2 subfamily.

It catalyses the reaction uridine(55) in tRNA = pseudouridine(55) in tRNA. Could be responsible for synthesis of pseudouridine from uracil-55 in the psi GC loop of transfer RNAs. This is Probable tRNA pseudouridine synthase B from Thermococcus gammatolerans (strain DSM 15229 / JCM 11827 / EJ3).